Here is a 915-residue protein sequence, read N- to C-terminus: Rab3 GTPase-activating protein catalytic subunit (915 aa).

Belongs to the Rab3-GAP catalytic subunit family. As to quaternary structure, the Rab3 GTPase-activating complex is a heterodimer composed of rbg-1 and rbg-2.

It localises to the cytoplasm. Its function is as follows. Probable catalytic subunit of a GTPase activating protein that has specificity for Rab3 subfamily. Rab3 proteins are involved in regulated exocytosis of neurotransmitters and hormones. Specifically converts active Rab3-GTP to the inactive form Rab3-GDP. This Caenorhabditis elegans protein is Rab3 GTPase-activating protein catalytic subunit (rbg-1).